A 448-amino-acid chain; its full sequence is Ribosomal protein uS12 methylthiotransferase RimO (448 aa).

The 116-residue stretch at 13–128 folds into the MTTase N-terminal domain; the sequence is KSFFITTLGC…AGEILRKNFP (116 aa). Cysteine 22, cysteine 58, cysteine 91, cysteine 167, cysteine 171, and cysteine 174 together coordinate [4Fe-4S] cluster. The region spanning 153–382 is the Radical SAM core domain; sequence NYSKPYSYVK…AYLGTLKTIH (230 aa). The 66-residue stretch at 383-448 folds into the TRAM domain; it reads QNRIGKIYPC…ELDMSGTWVD (66 aa).

This sequence belongs to the methylthiotransferase family. RimO subfamily. [4Fe-4S] cluster serves as cofactor.

Its subcellular location is the cytoplasm. It catalyses the reaction L-aspartate(89)-[ribosomal protein uS12]-hydrogen + (sulfur carrier)-SH + AH2 + 2 S-adenosyl-L-methionine = 3-methylsulfanyl-L-aspartate(89)-[ribosomal protein uS12]-hydrogen + (sulfur carrier)-H + 5'-deoxyadenosine + L-methionine + A + S-adenosyl-L-homocysteine + 2 H(+). Functionally, catalyzes the methylthiolation of an aspartic acid residue of ribosomal protein uS12. This chain is Ribosomal protein uS12 methylthiotransferase RimO, found in Leptospira biflexa serovar Patoc (strain Patoc 1 / Ames).